Here is a 117-residue protein sequence, read N- to C-terminus: MTSRVGPPLRILSDSLKKLRRVSGAIFYGRREVSHVEIAGTCIDRGRVFARILDFCGEVLVEIGDQKIALGSSYLLVCKVQARSGGIGLHCKSAKRLGIFEEMFFWAEAVNLEGGLQ.

This is an uncharacterized protein from Encephalitozoon cuniculi (strain GB-M1) (Microsporidian parasite).